Here is a 421-residue protein sequence, read N- to C-terminus: Gamma-glutamyl phosphate reductase (421 aa).

The protein belongs to the gamma-glutamyl phosphate reductase family.

The protein resides in the cytoplasm. It carries out the reaction L-glutamate 5-semialdehyde + phosphate + NADP(+) = L-glutamyl 5-phosphate + NADPH + H(+). It participates in amino-acid biosynthesis; L-proline biosynthesis; L-glutamate 5-semialdehyde from L-glutamate: step 2/2. In terms of biological role, catalyzes the NADPH-dependent reduction of L-glutamate 5-phosphate into L-glutamate 5-semialdehyde and phosphate. The product spontaneously undergoes cyclization to form 1-pyrroline-5-carboxylate. This is Gamma-glutamyl phosphate reductase from Pseudomonas aeruginosa (strain ATCC 15692 / DSM 22644 / CIP 104116 / JCM 14847 / LMG 12228 / 1C / PRS 101 / PAO1).